The chain runs to 263 residues: MAARTKNGLTASASGMQSLLPHTLPHADPAGPRDSLYPAFFTGIDEAGRGCLAGPVVAAAVILPPAGAPAAPHIAAALSGLTDSKKLSEKRRLTLEPAIKSCAVRWGVGVVWPQVIDRINILQATYRAMSLAVRHLRGGGAAASMPAGLPPVFLAVDGDKTIPGQVLQAVTGLSVPQEAIVGGDGCVMAISAASVLAKTFRDRLMTALDKRYSGYGFATHKGYGTAAHIEAIRRLGPCRMHRLSFAKVKPAAAPHAADQNTLW.

Residues 39–257 form the RNase H type-2 domain; sequence AFFTGIDEAG…VKPAAAPHAA (219 aa). The a divalent metal cation site is built by Asp45, Glu46, and Asp157.

Belongs to the RNase HII family. It depends on Mn(2+) as a cofactor. Mg(2+) serves as cofactor.

The protein localises to the cytoplasm. It catalyses the reaction Endonucleolytic cleavage to 5'-phosphomonoester.. Endonuclease that specifically degrades the RNA of RNA-DNA hybrids. The chain is Ribonuclease HII from Oleidesulfovibrio alaskensis (strain ATCC BAA-1058 / DSM 17464 / G20) (Desulfovibrio alaskensis).